The primary structure comprises 340 residues: C5a anaphylatoxin chemotactic receptor 1 (340 aa).

Topologically, residues 1 to 30 are extracellular; it reads TPDYGHYDDKDTLDANTPVDKTSNTLRVPD. The interval 3–11 is required for CHIPS binding; it reads DYGHYDDKD. Tyrosine 4 and tyrosine 7 each carry sulfotyrosine. An involved in C5a binding region spans residues 14–23; it reads DANTPVDKTS. A helical membrane pass occupies residues 31–57; sequence ILALVIFAVVFLVGVLRNALVVWVTAF. Topologically, residues 58-62 are cytoplasmic; sequence EAKRT. The helical transmembrane segment at 63-86 threads the bilayer; that stretch reads INAIWFLNLAVADFLSCLALPILF. Over 87–103 the chain is Extracellular; it reads TSIVQHHHWPFGGAACR. A disulfide bond links cysteine 102 and cysteine 181. The helical transmembrane segment at 104–125 threads the bilayer; sequence ILPSLILLNMYASILLLATISA. Topologically, residues 126 to 146 are cytoplasmic; it reads DRFLLVFNPIWCQNFRGAGLA. A helical transmembrane segment spans residues 147-167; the sequence is WIACAVAWGLALLLTIPSFLY. The Extracellular segment spans residues 168–193; that stretch reads RVVREEYFPPKVLCGVDHGHDKRRER. The helical transmembrane segment at 194–219 threads the bilayer; that stretch reads AVAIARLVLGFVWPLLTLTMCYTFLL. Residues 220–235 lie on the Cytoplasmic side of the membrane; sequence LRTWSRRATRSTKTLK. Residues 236-258 traverse the membrane as a helical segment; it reads VVVAVVASFFIFWLPYQVTGMMM. At 259–275 the chain is on the extracellular side; it reads SFLEPSSPTFLLLKKLD. Residues 276–296 traverse the membrane as a helical segment; that stretch reads SLCISFAYINCCINPIIYVVA. Residues 297–340 are Cytoplasmic-facing; sequence GQGFQGRLRKSLPSLLRNVLTEESMVRESKSFTRSTVDTMAQKT. 6 positions are modified to phosphoserine: serine 307, serine 310, serine 320, serine 325, serine 327, and serine 331.

The protein belongs to the G-protein coupled receptor 1 family. As to quaternary structure, homodimer. May also form higher-order oligomers. Interacts (when phosphorylated) with ARRB1 and ARRB2; the interaction is associated with internalization of C5aR. Interacts (via N-terminal domain) with S.aureus chemotaxis inhibitory protein (CHIPS); the interaction blocks the receptor and may thus inhibit the immune response. Post-translationally, sulfation plays a critical role in the association of C5aR with C5a, but no significant role in the ability of the receptor to transduce a signal and mobilize calcium in response to a small peptide agonist. Sulfation at Tyr-7 is important for CHIPS binding. Phosphorylated on serine residues in response to C5a binding, resulting in internalization of the receptor and short-term desensitization to C5a.

It localises to the cell membrane. Its subcellular location is the cytoplasmic vesicle. Its function is as follows. Receptor for the chemotactic and inflammatory peptide anaphylatoxin C5a. The ligand interacts with at least two sites on the receptor: a high-affinity site on the extracellular N-terminus, and a second site in the transmembrane region which activates downstream signaling events. Receptor activation stimulates chemotaxis, granule enzyme release, intracellular calcium release and superoxide anion production. The polypeptide is C5a anaphylatoxin chemotactic receptor 1 (C5AR1) (Macaca mulatta (Rhesus macaque)).